The sequence spans 295 residues: Small ribosomal subunit protein uS2 (295 aa).

The disordered stretch occupies residues 264-295 (KFSKTKNIDEETNTEFEQALNDTDENKNADNA).

Belongs to the universal ribosomal protein uS2 family.

This is Small ribosomal subunit protein uS2 from Rickettsia akari (strain Hartford).